The following is a 345-amino-acid chain: Transcription factor 19 (345 aa).

Residues 31 to 88 (YRLGHRADLCDVALRPQQEPGLISGIHAELHAEPRGDDWRVSLEDHSSQGTLVNNVRL) form the FHA domain. Serine 78 is subject to Phosphoserine. 2 disordered regions span residues 147–167 (AGFRPMLPSQGAPQRPLSTLS) and 190–227 (LTFSPSWGGPKSLPVPAPPGEVGTTPSAPPQRNRRKSV). Residues 293 to 342 (AAPCCCLPQEETVAWVQCDGCDVWFHVACVGCSIQAAREADFRCPGCRAG) form a PHD-type zinc finger. Positions 296, 298, 310, 313, 318, 321, 336, and 339 each coordinate Zn(2+).

It localises to the nucleus. Potential transcription factor that may play a role in the regulation of genes involved in cell cycle G1/S transition. May bind to regulatory elements of genes, including the promoter of the transcription factor FOXO1. The chain is Transcription factor 19 (TCF19) from Pan troglodytes (Chimpanzee).